Consider the following 198-residue polypeptide: Recombination protein RecR (198 aa).

A C4-type zinc finger spans residues 58 to 73; that stretch reads CSVCNNLTEKDPCDFC. Residues 81 to 175 enclose the Toprim domain; sequence NLICVVESPK…KVTRIAHGLP (95 aa).

The protein belongs to the RecR family.

In terms of biological role, may play a role in DNA repair. It seems to be involved in an RecBC-independent recombinational process of DNA repair. It may act with RecF and RecO. The chain is Recombination protein RecR from Halothermothrix orenii (strain H 168 / OCM 544 / DSM 9562).